We begin with the raw amino-acid sequence, 357 residues long: 3-isopropylmalate dehydrogenase (357 aa).

NAD(+) is bound at residue 76–89; the sequence is GPKWDALDSNIRPE. Positions 96, 106, 134, and 224 each coordinate substrate. Mg(2+) is bound by residues Asp-224, Asp-248, and Asp-252. 282-294 serves as a coordination point for NAD(+); it reads GSAPDIAGQGVAN.

Belongs to the isocitrate and isopropylmalate dehydrogenases family. LeuB type 1 subfamily. Homodimer. It depends on Mg(2+) as a cofactor. Requires Mn(2+) as cofactor.

It localises to the cytoplasm. The catalysed reaction is (2R,3S)-3-isopropylmalate + NAD(+) = 4-methyl-2-oxopentanoate + CO2 + NADH. The protein operates within amino-acid biosynthesis; L-leucine biosynthesis; L-leucine from 3-methyl-2-oxobutanoate: step 3/4. Functionally, catalyzes the oxidation of 3-carboxy-2-hydroxy-4-methylpentanoate (3-isopropylmalate) to 3-carboxy-4-methyl-2-oxopentanoate. The product decarboxylates to 4-methyl-2 oxopentanoate. In Saccharophagus degradans (strain 2-40 / ATCC 43961 / DSM 17024), this protein is 3-isopropylmalate dehydrogenase.